The primary structure comprises 42 residues: Large ribosomal subunit protein bL36 (42 aa).

This sequence belongs to the bacterial ribosomal protein bL36 family.

The chain is Large ribosomal subunit protein bL36 from Wolbachia sp. subsp. Brugia malayi (strain TRS).